Here is a 291-residue protein sequence, read N- to C-terminus: Capsid protein (291 aa).

The span at methionine 1–glutamate 14 shows a compositional bias: polar residues. The segment at methionine 1–asparagine 36 is disordered.

Belongs to the potexviruses coat protein family.

It is found in the virion. Required for genome encapsidation. Forms ribonucleoprotein complexes along with TGB1 helicase and viral RNA. This is Capsid protein from Lily symptomless virus (LSV).